A 50-amino-acid polypeptide reads, in one-letter code: Large ribosomal subunit protein bL33 (50 aa).

This sequence belongs to the bacterial ribosomal protein bL33 family.

In Fusobacterium nucleatum subsp. nucleatum (strain ATCC 25586 / DSM 15643 / BCRC 10681 / CIP 101130 / JCM 8532 / KCTC 2640 / LMG 13131 / VPI 4355), this protein is Large ribosomal subunit protein bL33.